A 468-amino-acid chain; its full sequence is Squamosa promoter-binding-like protein 5 (468 aa).

The segment at P204–P281 adopts an SBP-type zinc-finger fold. Residues C207, C212, C229, H232, C248, C251, H255, and C267 each contribute to the Zn(2+) site. Residues K264–K280 carry the Bipartite nuclear localization signal motif. 3 disordered regions span residues R270 to I305, T354 to L374, and H405 to N458. The span at Q363–G372 shows a compositional bias: acidic residues. The segment covering N438 to N458 has biased composition (low complexity).

As to expression, ubiquitous.

Its subcellular location is the nucleus. Its function is as follows. Trans-acting factor that binds specifically to the consensus nucleotide sequence 5'-TNCGTACAA-3'. The sequence is that of Squamosa promoter-binding-like protein 5 (SPL5) from Oryza sativa subsp. japonica (Rice).